Consider the following 474-residue polypeptide: tRNA-2-methylthio-N(6)-dimethylallyladenosine synthase (474 aa).

Positions 3–120 (KKLHIKTWGC…LPEMINHVQG (118 aa)) constitute an MTTase N-terminal domain. Residues cysteine 12, cysteine 49, cysteine 83, cysteine 157, cysteine 161, and cysteine 164 each coordinate [4Fe-4S] cluster. The 233-residue stretch at 143–375 (RAEGPTAFVS…QQRITQQAME (233 aa)) folds into the Radical SAM core domain. The TRAM domain maps to 378-441 (REMVGTVQRI…ASSLRGILLR (64 aa)).

This sequence belongs to the methylthiotransferase family. MiaB subfamily. Monomer. Requires [4Fe-4S] cluster as cofactor.

The protein resides in the cytoplasm. The enzyme catalyses N(6)-dimethylallyladenosine(37) in tRNA + (sulfur carrier)-SH + AH2 + 2 S-adenosyl-L-methionine = 2-methylsulfanyl-N(6)-dimethylallyladenosine(37) in tRNA + (sulfur carrier)-H + 5'-deoxyadenosine + L-methionine + A + S-adenosyl-L-homocysteine + 2 H(+). In terms of biological role, catalyzes the methylthiolation of N6-(dimethylallyl)adenosine (i(6)A), leading to the formation of 2-methylthio-N6-(dimethylallyl)adenosine (ms(2)i(6)A) at position 37 in tRNAs that read codons beginning with uridine. This Yersinia enterocolitica serotype O:8 / biotype 1B (strain NCTC 13174 / 8081) protein is tRNA-2-methylthio-N(6)-dimethylallyladenosine synthase.